The primary structure comprises 467 residues: Putative vacuolar protein sorting-associated protein TDA6 (467 aa).

A helical transmembrane segment spans residues 8-28; the sequence is ILLWFLIVDLSVIRALVLPPL. 3 N-linked (GlcNAc...) asparagine glycosylation sites follow: Asn-61, Asn-124, and Asn-141.

Belongs to the VPS62 family.

The protein resides in the membrane. In terms of biological role, involved in vacuolar protein sorting. The polypeptide is Putative vacuolar protein sorting-associated protein TDA6 (TDA6) (Saccharomyces cerevisiae (strain ATCC 204508 / S288c) (Baker's yeast)).